The sequence spans 501 residues: Probable Xaa-Pro aminopeptidase pepP (501 aa).

The interval 1–25 is disordered; it reads MNYHSFLPLRRSSLSHSTTPPSKSR. A compositionally biased stretch (polar residues) spans 12–25; that stretch reads SSLSHSTTPPSKSR. Mn(2+)-binding residues include D298, D309, E432, and E472.

The protein belongs to the peptidase M24B family. It depends on Mn(2+) as a cofactor.

It catalyses the reaction Release of any N-terminal amino acid, including proline, that is linked to proline, even from a dipeptide or tripeptide.. Functionally, catalyzes the removal of a penultimate prolyl residue from the N-termini of peptides. The chain is Probable Xaa-Pro aminopeptidase pepP (pepP) from Metarhizium acridum (strain CQMa 102).